The chain runs to 106 residues: EspC protein homolog (106 aa).

Belongs to the EspC family.

The chain is EspC protein homolog from Mycobacterium leprae (strain TN).